Consider the following 190-residue polypeptide: Xanthine phosphoribosyltransferase (190 aa).

Residues Leu-20 and Asn-27 each coordinate xanthine. 128–132 (ANGNA) serves as a coordination point for 5-phospho-alpha-D-ribose 1-diphosphate. Lys-156 provides a ligand contact to xanthine.

The protein belongs to the purine/pyrimidine phosphoribosyltransferase family. Xpt subfamily. Homodimer.

It localises to the cytoplasm. It catalyses the reaction XMP + diphosphate = xanthine + 5-phospho-alpha-D-ribose 1-diphosphate. The protein operates within purine metabolism; XMP biosynthesis via salvage pathway; XMP from xanthine: step 1/1. Converts the preformed base xanthine, a product of nucleic acid breakdown, to xanthosine 5'-monophosphate (XMP), so it can be reused for RNA or DNA synthesis. This Clostridium novyi (strain NT) protein is Xanthine phosphoribosyltransferase.